Reading from the N-terminus, the 318-residue chain is Acetyl-coenzyme A carboxylase carboxyl transferase subunit alpha (318 aa).

Positions 34–295 constitute a CoA carboxyltransferase C-terminal domain; that stretch reads SIEEEITKLR…KATIKQQLAQ (262 aa).

The protein belongs to the AccA family. In terms of assembly, acetyl-CoA carboxylase is a heterohexamer composed of biotin carboxyl carrier protein (AccB), biotin carboxylase (AccC) and two subunits each of ACCase subunit alpha (AccA) and ACCase subunit beta (AccD).

The protein resides in the cytoplasm. The catalysed reaction is N(6)-carboxybiotinyl-L-lysyl-[protein] + acetyl-CoA = N(6)-biotinyl-L-lysyl-[protein] + malonyl-CoA. Its pathway is lipid metabolism; malonyl-CoA biosynthesis; malonyl-CoA from acetyl-CoA: step 1/1. Its function is as follows. Component of the acetyl coenzyme A carboxylase (ACC) complex. First, biotin carboxylase catalyzes the carboxylation of biotin on its carrier protein (BCCP) and then the CO(2) group is transferred by the carboxyltransferase to acetyl-CoA to form malonyl-CoA. The chain is Acetyl-coenzyme A carboxylase carboxyl transferase subunit alpha from Pseudoalteromonas atlantica (strain T6c / ATCC BAA-1087).